The chain runs to 158 residues: Interleukin-36 alpha (158 aa).

Residues 1-5 constitute a propeptide that is removed on maturation; the sequence is MEKAL. 3'-nitrotyrosine is present on Tyr-96.

It belongs to the IL-1 family. In terms of assembly, interacts with TMED10; the interaction mediates the translocation from the cytoplasm into the ERGIC (endoplasmic reticulum-Golgi intermediate compartment) and thereby secretion. N-terminal truncation leads to a dramatic enhancement of its activity (&gt;1000-fold). As to expression, expressed in immune system and fetal brain, but not in other tissues tested or in multiple hematopoietic cell lines. Predominantly expressed in skin keratinocytes but not in fibroblasts, endothelial cells or melanocytes. Increased in lesional psoriasis skin.

It localises to the cytoplasm. It is found in the secreted. Functionally, cytokine that binds to and signals through the IL1RL2/IL-36R receptor which in turn activates NF-kappa-B and MAPK signaling pathways in target cells linked to a pro-inflammatory response. Part of the IL-36 signaling system that is thought to be present in epithelial barriers and to take part in local inflammatory response; similar to the IL-1 system with which it shares the coreceptor IL1RAP. Seems to be involved in skin inflammatory response by acting on keratinocytes, dendritic cells and indirectly on T-cells to drive tissue infiltration, cell maturation and cell proliferation. In cultured keratinocytes induces the expression of macrophage, T-cell, and neutrophil chemokines, such as CCL3, CCL4, CCL5, CCL2, CCL17, CCL22, CL20, CCL5, CCL2, CCL17, CCL22, CXCL8, CCL20 and CXCL1, and the production of pro-inflammatory cytokines such as TNF-alpha, IL-8 and IL-6. In cultured monocytes up-regulates expression of IL-1A, IL-1B and IL-6. In myeloid dendritic cells involved in cell maturation by up-regulating surface expression of CD83, CD86 and HLA-DR. In monocyte-derived dendritic cells facilitates dendritic cell maturation and drives T-cell proliferation. May play a role in pro-inflammatory effects in the lung. The polypeptide is Interleukin-36 alpha (Homo sapiens (Human)).